The primary structure comprises 349 residues: Isopentenyl-diphosphate delta-isomerase (349 aa).

A substrate-binding site is contributed by Arg6–Lys7. FMN-binding positions include Ala62–Thr64, Ser93, and Asn122. Gln152 is a binding site for substrate. Glu153 contributes to the Mg(2+) binding site. Residues Lys184, Thr214, Gly258 to Gly259, and Ala280 to Gly281 each bind FMN.

Belongs to the IPP isomerase type 2 family. In terms of assembly, homooctamer. Dimer of tetramers. It depends on FMN as a cofactor. NADPH is required as a cofactor. Mg(2+) serves as cofactor.

It is found in the cytoplasm. The enzyme catalyses isopentenyl diphosphate = dimethylallyl diphosphate. Involved in the biosynthesis of isoprenoids. Catalyzes the 1,3-allylic rearrangement of the homoallylic substrate isopentenyl (IPP) to its allylic isomer, dimethylallyl diphosphate (DMAPP). The protein is Isopentenyl-diphosphate delta-isomerase of Bacillus cereus (strain ATCC 14579 / DSM 31 / CCUG 7414 / JCM 2152 / NBRC 15305 / NCIMB 9373 / NCTC 2599 / NRRL B-3711).